The chain runs to 528 residues: Phosphoenolpyruvate carboxykinase (ATP) (528 aa).

Substrate contacts are provided by Arg56, Tyr192, and Lys198. ATP is bound by residues Lys198, His217, and 233–241 (GLSGTGKTT). Residues Lys198 and His217 each contribute to the Mn(2+) site. Mn(2+) is bound at residue Asp254. Glu282, Arg319, and Thr444 together coordinate ATP. Substrate is bound at residue Arg319.

This sequence belongs to the phosphoenolpyruvate carboxykinase (ATP) family. It depends on Mn(2+) as a cofactor.

The protein resides in the cytoplasm. The catalysed reaction is oxaloacetate + ATP = phosphoenolpyruvate + ADP + CO2. The protein operates within carbohydrate biosynthesis; gluconeogenesis. Involved in the gluconeogenesis. Catalyzes the conversion of oxaloacetate (OAA) to phosphoenolpyruvate (PEP) through direct phosphoryl transfer between the nucleoside triphosphate and OAA. The sequence is that of Phosphoenolpyruvate carboxykinase (ATP) from Bacillus cereus (strain ATCC 10987 / NRS 248).